The sequence spans 834 residues: Probable basic-leucine zipper transcription factor D (834 aa).

The segment at 83 to 160 (NNNNMLNDHS…SNNNSSSEGE (78 aa)) is disordered. Positions 90-111 (DHSSSPMRVPNSSPSLYNNSIE) are enriched in polar residues. A compositionally biased stretch (low complexity) spans 119–157 (DNSNNNNNNNNNINVNDINVNDINSNSTNNNESNNNSSS). Positions 211-246 (SEQQQQQQQQQQQQQQQQQQQQQQQQQHQHLLQEHQ) form a coiled coil. Residues 378 to 405 (VVDPPTHNQEDERNVKKQRRLIKNRESA) are disordered. A bZIP domain is found at 391-454 (NVKKQRRLIK…KQLAAQNSNS (64 aa)). A basic motif region spans residues 393–402 (KKQRRLIKNR). Residues 407–414 (LSRMRKKI) are leucine-zipper. Disordered stretches follow at residues 455–504 (NNNS…QQQS) and 550–712 (LSMS…KTPQ). Residues 550–595 (LSMSDSESSPQKSLRLSSNHHSLPDGTFNTIPIDQQTTATTNTKSL) show a composition bias toward polar residues. 2 stretches are compositionally biased toward low complexity: residues 616-651 (NNNN…NNNN) and 694-707 (TTTT…TTST).

The protein belongs to the bZIP family.

It localises to the nucleus. In terms of biological role, probable transcriptional regulator. This chain is Probable basic-leucine zipper transcription factor D (bzpD), found in Dictyostelium discoideum (Social amoeba).